The sequence spans 349 residues: Beta-hexosaminidase (349 aa).

Substrate contacts are provided by residues Asp-64, Arg-72, Arg-138, and 168–169 (KH). His-181 serves as the catalytic Proton donor/acceptor. Asp-252 (nucleophile) is an active-site residue.

It belongs to the glycosyl hydrolase 3 family. NagZ subfamily.

The protein localises to the cytoplasm. It catalyses the reaction Hydrolysis of terminal non-reducing N-acetyl-D-hexosamine residues in N-acetyl-beta-D-hexosaminides.. The protein operates within cell wall biogenesis; peptidoglycan recycling. In terms of biological role, plays a role in peptidoglycan recycling by cleaving the terminal beta-1,4-linked N-acetylglucosamine (GlcNAc) from peptide-linked peptidoglycan fragments, giving rise to free GlcNAc, anhydro-N-acetylmuramic acid and anhydro-N-acetylmuramic acid-linked peptides. In Methylobacillus flagellatus (strain ATCC 51484 / DSM 6875 / VKM B-1610 / KT), this protein is Beta-hexosaminidase.